A 201-amino-acid chain; its full sequence is Holliday junction branch migration complex subunit RuvA (201 aa).

Residues 1 to 64 (MIGRLHGKII…EDAHLLFGFA (64 aa)) form a domain I region. A domain II region spans residues 65–143 (QKQDRTLFRE…GVAQSDFFEE (79 aa)). The segment at 144–154 (HSVETIVATHS) is flexible linker. Residues 154 to 201 (SHDPADEARDALVALGYKLADAEKMIKKVNKAGATSEQLIREALKASL) form a domain III region.

Belongs to the RuvA family. Homotetramer. Forms an RuvA(8)-RuvB(12)-Holliday junction (HJ) complex. HJ DNA is sandwiched between 2 RuvA tetramers; dsDNA enters through RuvA and exits via RuvB. An RuvB hexamer assembles on each DNA strand where it exits the tetramer. Each RuvB hexamer is contacted by two RuvA subunits (via domain III) on 2 adjacent RuvB subunits; this complex drives branch migration. In the full resolvosome a probable DNA-RuvA(4)-RuvB(12)-RuvC(2) complex forms which resolves the HJ.

It is found in the cytoplasm. Its function is as follows. The RuvA-RuvB-RuvC complex processes Holliday junction (HJ) DNA during genetic recombination and DNA repair, while the RuvA-RuvB complex plays an important role in the rescue of blocked DNA replication forks via replication fork reversal (RFR). RuvA specifically binds to HJ cruciform DNA, conferring on it an open structure. The RuvB hexamer acts as an ATP-dependent pump, pulling dsDNA into and through the RuvAB complex. HJ branch migration allows RuvC to scan DNA until it finds its consensus sequence, where it cleaves and resolves the cruciform DNA. This Actinobacillus pleuropneumoniae serotype 7 (strain AP76) protein is Holliday junction branch migration complex subunit RuvA.